The chain runs to 222 residues: Putative hemin import ATP-binding protein HrtA (222 aa).

In terms of domain architecture, ABC transporter spans 3–222 (LVVKDISKTF…QLYDGKIKNS (220 aa)). An ATP-binding site is contributed by 39-46 (GASGSGKT).

This sequence belongs to the ABC transporter superfamily. HrtA family. In terms of assembly, the complex is composed of two ATP-binding proteins (HrtA), two transmembrane proteins (HrtB) and a solute-binding protein.

The protein resides in the cell membrane. In terms of biological role, part of the ABC transporter complex hrt involved in hemin import. Responsible for energy coupling to the transport system. This chain is Putative hemin import ATP-binding protein HrtA (hrtA), found in Staphylococcus epidermidis (strain ATCC 35984 / DSM 28319 / BCRC 17069 / CCUG 31568 / BM 3577 / RP62A).